The chain runs to 347 residues: MTSVERENQVSVLFIGDPHFKVKNYEFIPQFVEKILTILDRNPVDFVVVGGDLLDNHERLDVDPLNQAINFIDQLRTRHPTFVLVGNHDYKNNQQFLTADHWMNALKFWSNVTIVDRVVQHTCNRMKFVLVPYVPPGRFVEAIKTQLEEKELRAVKVVFAHQEFFGCKMGAITSSEGDKWPTDWPLVVSGHIHNKQWPQDNIYYPGSAMQHAFGQSVENTISRLVVRNKEFEYDEINLKMPKLSIKYMTVEDAARGNLRYKNTDRKRYKLVLSGALDEFAGFKKTAVYKQLLEEGFAVSFKIKPSTEVRSVDTLNGSRKFLDILTEKVQTTGDADLESLCKSFLAQG.

Aspartate 52, asparagine 87, and histidine 211 together coordinate a divalent metal cation.

It belongs to the metallophosphoesterase superfamily. IIV-6 244L family.

The protein is Putative phosphoesterase 078R of Invertebrate iridescent virus 3 (IIV-3).